A 492-amino-acid polypeptide reads, in one-letter code: uncharacterized protein (492 aa).

Transmembrane regions (helical) follow at residues 16 to 36 (FIAF…VMTM), 39 to 59 (VGPF…GVVL), 107 to 127 (SFNG…IPVV), 133 to 153 (IIIG…FISL), 162 to 182 (AIFY…ILGI), 210 to 230 (IIFI…LASI), 243 to 263 (FLIA…IISG), 291 to 311 (LVGG…NSLA), 350 to 370 (VLIS…IPFL), 394 to 414 (MAAA…FMIF), 429 to 449 (VSYV…LFPF), and 454 to 474 (VFNT…VGFF).

The protein to M.genitalium MG225.

The protein resides in the cell membrane. This is an uncharacterized protein from Mycoplasma genitalium (strain ATCC 33530 / DSM 19775 / NCTC 10195 / G37) (Mycoplasmoides genitalium).